Consider the following 590-residue polypeptide: Aspartate--tRNA(Asp/Asn) ligase (590 aa).

Glu176 provides a ligand contact to L-aspartate. Positions 200–203 are aspartate; it reads QLFK. Arg222 and His451 together coordinate L-aspartate. Residue 222 to 224 coordinates ATP; it reads RDE. Glu485 lines the ATP pocket. Arg492 serves as a coordination point for L-aspartate. Residue 537–540 coordinates ATP; it reads GIDR.

Belongs to the class-II aminoacyl-tRNA synthetase family. Type 1 subfamily. As to quaternary structure, homodimer.

The protein localises to the cytoplasm. It carries out the reaction tRNA(Asx) + L-aspartate + ATP = L-aspartyl-tRNA(Asx) + AMP + diphosphate. In terms of biological role, aspartyl-tRNA synthetase with relaxed tRNA specificity since it is able to aspartylate not only its cognate tRNA(Asp) but also tRNA(Asn). Reaction proceeds in two steps: L-aspartate is first activated by ATP to form Asp-AMP and then transferred to the acceptor end of tRNA(Asp/Asn). In Ehrlichia ruminantium (strain Welgevonden), this protein is Aspartate--tRNA(Asp/Asn) ligase.